The primary structure comprises 130 residues: Large ribosomal subunit protein bL17 (130 aa).

Belongs to the bacterial ribosomal protein bL17 family. In terms of assembly, part of the 50S ribosomal subunit. Contacts protein L32.

This is Large ribosomal subunit protein bL17 from Nitrosomonas europaea (strain ATCC 19718 / CIP 103999 / KCTC 2705 / NBRC 14298).